Reading from the N-terminus, the 234-residue chain is Ribonuclease Trv (234 aa).

5 disulfides stabilise this stretch: Cys5–Cys24, Cys13–Cys59, Cys23–Cys125, Cys67–Cys117, and Cys189–Cys224. N-linked (GlcNAc...) asparagine glycosylation occurs at Asn15. The active site involves His52. N-linked (GlcNAc...) asparagine glycosylation occurs at Asn75. Active-site residues include Glu110 and His114.

Belongs to the RNase T2 family.

It carries out the reaction a ribonucleotidyl-ribonucleotide-RNA + H2O = a 3'-end 3'-phospho-ribonucleotide-RNA + a 5'-end dephospho-ribonucleoside-RNA + H(+). In terms of biological role, this is a base non-specific and adenylic acid preferential ribonuclease. This is Ribonuclease Trv from Hypocrea rufa (Trichoderma viride).